The following is a 301-amino-acid chain: MAYVPAPGYQPTYNPTLPYKRPIPGGLSVGMSFYIQGTAKENMRRFHVNFAVGQDDGADVAFHFNPRFDGWDKVVFNTKQSGRWGKEEEKSMPFQKGKHFELVFMVMPEHYKVVVNGSPFYEYGHRLPVQMVTHLQVDGDLELQSINFFGVQPAETKYPAMTGPPVFNPCLPYVGALQGGFTVRRTIIIKGYVLPTAKTFAINFRVGSSEDIALHINPRIGDCLVRNSYMNGSWGTEERMVAYNPFGPGQFFDLSIRCGMDRFKVFANGIHLFNFSHRFQALRKINTLEINGDLTLSYVHI.

Galectin domains follow at residues 19–149 (YKRP…INFF) and 173–301 (YVGA…YVHI).

The chain is Galectin-6 (Lgals6) from Mus musculus (Mouse).